The following is a 326-amino-acid chain: Serpentine receptor class gamma-14 (326 aa).

7 consecutive transmembrane segments (helical) span residues 36 to 56 (QIIY…TILW), 67 to 83 (FFTL…SILI), 115 to 135 (IIML…VLLV), 156 to 176 (LKYV…NIAI), 204 to 224 (FQLV…AITL), 243 to 263 (VIIS…SFFF), and 274 to 294 (GFSF…MICV).

Belongs to the nematode receptor-like protein srg family.

It localises to the membrane. This chain is Serpentine receptor class gamma-14 (srg-14), found in Caenorhabditis elegans.